Consider the following 169-residue polypeptide: Crossover junction endodeoxyribonuclease RuvC (169 aa).

Residues Asp-7, Glu-67, and Asp-140 contribute to the active site. Asp-7, Glu-67, and Asp-140 together coordinate Mg(2+).

It belongs to the RuvC family. In terms of assembly, homodimer which binds Holliday junction (HJ) DNA. The HJ becomes 2-fold symmetrical on binding to RuvC with unstacked arms; it has a different conformation from HJ DNA in complex with RuvA. In the full resolvosome a probable DNA-RuvA(4)-RuvB(12)-RuvC(2) complex forms which resolves the HJ. Mg(2+) serves as cofactor.

Its subcellular location is the cytoplasm. The catalysed reaction is Endonucleolytic cleavage at a junction such as a reciprocal single-stranded crossover between two homologous DNA duplexes (Holliday junction).. The RuvA-RuvB-RuvC complex processes Holliday junction (HJ) DNA during genetic recombination and DNA repair. Endonuclease that resolves HJ intermediates. Cleaves cruciform DNA by making single-stranded nicks across the HJ at symmetrical positions within the homologous arms, yielding a 5'-phosphate and a 3'-hydroxyl group; requires a central core of homology in the junction. The consensus cleavage sequence is 5'-(A/T)TT(C/G)-3'. Cleavage occurs on the 3'-side of the TT dinucleotide at the point of strand exchange. HJ branch migration catalyzed by RuvA-RuvB allows RuvC to scan DNA until it finds its consensus sequence, where it cleaves and resolves the cruciform DNA. This chain is Crossover junction endodeoxyribonuclease RuvC, found in Clostridioides difficile (strain 630) (Peptoclostridium difficile).